The sequence spans 488 residues: GlcNAc-binding protein A (488 aa).

The N-terminal stretch at 1–24 (MIMIITKKTLLPVTLALFSSGVMA) is a signal peptide. The region spanning 25–202 (HGYVSSVEGG…SFYNVIDVMF (178 aa)) is the Chitin-binding type-4 domain. The Chitin-binding type-3 domain maps to 439-480 (AGSKVLATDGRIYECKPFPYSGYCIQWSPSATQFEPGVGSDW).

Belongs to the GbpA family.

Its subcellular location is the secreted. Functionally, probably interacts with GlcNAc residues. May promote attachment to both epithelial cell surfaces and chitin. This Photobacterium profundum (strain SS9) protein is GlcNAc-binding protein A.